Reading from the N-terminus, the 431-residue chain is MPQLTKSAELFELAKKFIPGGVNSPVRAFKSVGGTPIYMAKGEGAYMTDVDGNTYLDYVGSWGPFILGSMQPRVTAAIEYTLRNIGSSFGTPIEMEIEIAELLSRIVPSIEMVRMVNSGTEATMSAVRLARGYTGRDKIIKFEGCYHGHGDSFLIKAGSGVLTLGSPDSPGVTKGTAADTLNATYNDIESVRLLVNENRGDIAAIIIEPVAGNTGVIPAKKEFLVALRELCDQEGIVLIFDEVMCGFRVALGGAQELYGVTPDLTTMGKIIGGGLPVGAFGGKRKIMENVAPLGSVYQAGTLSGNPLALTAGLETLKILMEEDPYPELERKAAFLEAGFRENMQKLGLNYVQNRVGSMACLFFTETPVVDYKSAITADVAKYGKYFHSMLDQGIYLAPSQFEAMFTSYVHSDEDLEKTVKANYNALVAAHQ.

Position 269 is an N6-(pyridoxal phosphate)lysine (lysine 269).

It belongs to the class-III pyridoxal-phosphate-dependent aminotransferase family. HemL subfamily. In terms of assembly, homodimer. Pyridoxal 5'-phosphate is required as a cofactor.

It localises to the cytoplasm. The enzyme catalyses (S)-4-amino-5-oxopentanoate = 5-aminolevulinate. Its pathway is porphyrin-containing compound metabolism; protoporphyrin-IX biosynthesis; 5-aminolevulinate from L-glutamyl-tRNA(Glu): step 2/2. It participates in porphyrin-containing compound metabolism; chlorophyll biosynthesis. In Chlorobium limicola (strain DSM 245 / NBRC 103803 / 6330), this protein is Glutamate-1-semialdehyde 2,1-aminomutase.